The following is a 134-amino-acid chain: Holo-[acyl-carrier-protein] synthase (134 aa).

2 residues coordinate Mg(2+): D8 and E58.

Belongs to the P-Pant transferase superfamily. AcpS family. Mg(2+) is required as a cofactor.

It localises to the cytoplasm. It carries out the reaction apo-[ACP] + CoA = holo-[ACP] + adenosine 3',5'-bisphosphate + H(+). Functionally, transfers the 4'-phosphopantetheine moiety from coenzyme A to a Ser of acyl-carrier-protein. The protein is Holo-[acyl-carrier-protein] synthase of Ruminiclostridium cellulolyticum (strain ATCC 35319 / DSM 5812 / JCM 6584 / H10) (Clostridium cellulolyticum).